The following is a 223-amino-acid chain: Killer cell lectin-like receptor subfamily B member 1A (223 aa).

Over 1 to 43 (MDTARVYLSLKPSKTAAGAQCVSPPSLPPDACRCPRSHRLALK) the chain is Cytoplasmic. Positions 32–35 (CRCP) match the LCK-binding motif motif. Residues 44–63 (LSCAGLILLVLALVGMSILV) traverse the membrane as a helical; Signal-anchor for type II membrane protein segment. Topologically, residues 64 to 223 (RVLVQKPSVE…LKCECMCNDS (160 aa)) are extracellular. In terms of domain architecture, C-type lectin spans 93–212 (KCPKDWLSHR…DSDNIWVCQK (120 aa)). Disulfide bonds link cysteine 94–cysteine 105, cysteine 122–cysteine 210, and cysteine 189–cysteine 202.

In terms of assembly, homodimer; disulfide-linked. Interacts with tyrosine kinase LCK. As to expression, expressed in natural killer cells.

The protein resides in the membrane. Plays a stimulatory role on natural killer (NK) cell cytotoxicity. The sequence is that of Killer cell lectin-like receptor subfamily B member 1A (Klrb1a) from Rattus norvegicus (Rat).